The following is a 578-amino-acid chain: Endonuclease GajA (578 aa).

Residues Met-1–Lys-341 form an ATPase domain region. Asp-32 to Thr-36 serves as a coordination point for ATP. The tract at residues Leu-370–Ile-510 is toprim domain. 5 residues coordinate a divalent metal cation: Glu-379, Glu-383, Asp-463, Glu-464, and Glu-513.

As to quaternary structure, homotetramer. Forms the core of the anti-phage defense complex. Interacts with GajB; 2 GajB dimers dock at opposite sides of the GajA complex to form a 4:4 GajA-GajB assembly (GajAB). GajAB interacts with Bacillus phage Phi3T Gad1 protein; this interaction forms a 4:4:8 GajAB-Gad1 complex and leads to GajAB inhibition. Requires Mg(2+) as cofactor. The cofactor is Mn(2+).

Endonuclease activity inhibited by all NTPs, dNTPs, NDPs (at 0.5 mM, UDP not tested) and AMP-PNP; not inhibited by any tested NMP, dNMP or nucleoside. Inhibited by 100 mM NaCl, 100 mM KCl, 0.5 mM Co(2+) and 0.5 mM Ni(2+). In terms of biological role, component of antiviral defense system Gabija type I, composed of GajA and GajB. Endonuclease that nicks double-stranded DNA within the sequence 5'-TNNNCGGGNNA-3' in the absence of nucleotides (NTP, dNTP and NDPs), cleaving after C-1. Has no detected ATPase activity. Expression of Gabija type I in B.subtilis (strain BEST7003) confers resistance to phages phi105, phi29, rho14, SpBeta and SBSphiC. Expression of Gabija type I in E.coli B (strain ATCC 11303) confers resistance to phage T7. It is thought that this enzyme is strongly suppressed during physiological growth (in E.coli total nucleotide concentration is over 8.7 mM in mid-log phase), but during viral replication, when nucleotides are rapidly consumed, it is de-suppressed and degrades target DNA. The protein is Endonuclease GajA of Bacillus cereus (strain VD045).